The sequence spans 713 residues: Ribosomal RNA large subunit methyltransferase K/L (713 aa).

The 112-residue stretch at 46–157 (TAYRICLWSR…RDQATLSLDL (112 aa)) folds into the THUMP domain.

Belongs to the methyltransferase superfamily. RlmKL family.

The protein localises to the cytoplasm. It carries out the reaction guanosine(2445) in 23S rRNA + S-adenosyl-L-methionine = N(2)-methylguanosine(2445) in 23S rRNA + S-adenosyl-L-homocysteine + H(+). The catalysed reaction is guanosine(2069) in 23S rRNA + S-adenosyl-L-methionine = N(2)-methylguanosine(2069) in 23S rRNA + S-adenosyl-L-homocysteine + H(+). Functionally, specifically methylates the guanine in position 2445 (m2G2445) and the guanine in position 2069 (m7G2069) of 23S rRNA. The chain is Ribosomal RNA large subunit methyltransferase K/L from Syntrophotalea carbinolica (strain DSM 2380 / NBRC 103641 / GraBd1) (Pelobacter carbinolicus).